The chain runs to 83 residues: U20-theraphotoxin-Cg1a 1 (83 aa).

Positions 1-21 are cleaved as a signal peptide; sequence MKVSVLITLAVLGVMFVWTSA. A propeptide spanning residues 22 to 47 is cleaved from the precursor; the sequence is AELEERGSDQPAWLKSLERIFQSEER. 3 cysteine pairs are disulfide-bonded: C49–C63, C56–C68, and C62–C76.

Belongs to the neurotoxin 10 (Hwtx-1) family. 40 (Jztx-35) subfamily. Expressed by the venom gland.

It is found in the secreted. Its function is as follows. Probable ion channel inhibitor. This Chilobrachys guangxiensis (Chinese earth tiger tarantula) protein is U20-theraphotoxin-Cg1a 1.